The chain runs to 320 residues: Beta-ketoacyl-[acyl-carrier-protein] synthase III (320 aa).

Active-site residues include Cys114 and His247. The tract at residues 248–252 (QANRR) is ACP-binding. Asn277 is a catalytic residue.

The protein belongs to the thiolase-like superfamily. FabH family. In terms of assembly, homodimer.

It localises to the cytoplasm. The enzyme catalyses malonyl-[ACP] + acetyl-CoA + H(+) = 3-oxobutanoyl-[ACP] + CO2 + CoA. The protein operates within lipid metabolism; fatty acid biosynthesis. In terms of biological role, catalyzes the condensation reaction of fatty acid synthesis by the addition to an acyl acceptor of two carbons from malonyl-ACP. Catalyzes the first condensation reaction which initiates fatty acid synthesis and may therefore play a role in governing the total rate of fatty acid production. Possesses both acetoacetyl-ACP synthase and acetyl transacylase activities. Its substrate specificity determines the biosynthesis of branched-chain and/or straight-chain of fatty acids. The protein is Beta-ketoacyl-[acyl-carrier-protein] synthase III of Neisseria meningitidis serogroup C (strain 053442).